A 57-amino-acid chain; its full sequence is Potassium channel toxin alpha-KTx 8.8 (57 aa).

Positions 1–19 (MCRLYAIILIVLVMNVIMT) are cleaved as a signal peptide. A propeptide spanning residues 20 to 28 (IIPDSKVEV) is cleaved from the precursor. 3 cysteine pairs are disulfide-bonded: Cys-31–Cys-47, Cys-34–Cys-52, and Cys-38–Cys-54.

The protein belongs to the short scorpion toxin superfamily. Potassium channel inhibitor family. Alpha-KTx 08 subfamily. In terms of processing, contains 3 disulfide bonds. In terms of tissue distribution, expressed by the venom gland.

It localises to the secreted. Selectively inhibits voltage-gated potassium channels rKv1.2/KCNA2 (IC(50)=331 nM) and hKv1.3/KCNA3 (IC(50)=503 nM). Partially inihibts rKv1.6/KCNA6 (IC(50)=9983 nM). In Orthochirus scrobiculosus (Central Asian scorpion), this protein is Potassium channel toxin alpha-KTx 8.8.